Reading from the N-terminus, the 192-residue chain is MLKAGVIAVQGDVAEHADAIRRAADRHGEDCTVESIRSAGVVPECDLLLLPGGESTTISRLLAEEGIDEEIEAFAAAGKPLLATCAGLIVASRDAKDDRVSTLDILDVSVDRNAFGRQKDSFEAAIDVEGLDEPFPAVFIRAPLIDEVDAAVETLAAVDDRPVAVRQDNVVGTSFHPELTDDSRIHGLAFFS.

L-glutamine is bound at residue 53–55 (GES). The Nucleophile role is filled by Cys-85. L-glutamine contacts are provided by residues Arg-112 and 140–141 (IR). Active-site charge relay system residues include His-176 and Glu-178.

Belongs to the glutaminase PdxT/SNO family. As to quaternary structure, in the presence of PdxS, forms a dodecamer of heterodimers. Only shows activity in the heterodimer.

The catalysed reaction is aldehydo-D-ribose 5-phosphate + D-glyceraldehyde 3-phosphate + L-glutamine = pyridoxal 5'-phosphate + L-glutamate + phosphate + 3 H2O + H(+). It catalyses the reaction L-glutamine + H2O = L-glutamate + NH4(+). The protein operates within cofactor biosynthesis; pyridoxal 5'-phosphate biosynthesis. Functionally, catalyzes the hydrolysis of glutamine to glutamate and ammonia as part of the biosynthesis of pyridoxal 5'-phosphate. The resulting ammonia molecule is channeled to the active site of PdxS. In Natronomonas pharaonis (strain ATCC 35678 / DSM 2160 / CIP 103997 / JCM 8858 / NBRC 14720 / NCIMB 2260 / Gabara) (Halobacterium pharaonis), this protein is Pyridoxal 5'-phosphate synthase subunit PdxT.